The sequence spans 120 residues: Acyl carrier protein, mitochondrial (120 aa).

In terms of domain architecture, Carrier spans 43 to 117; that stretch reads KEITDRVIGV…ETISYLRKTP (75 aa). Ser77 bears the O-(pantetheine 4'-phosphoryl)serine mark.

This sequence belongs to the acyl carrier protein (ACP) family. In terms of assembly, complex I is composed of about 45 different subunits. In terms of processing, 4'-phosphopantetheine is transferred from CoA to a specific serine of apo-ACP by acpS. This modification is essential for activity because fatty acids are bound in thioester linkage to the sulfhydryl of the prosthetic group.

The protein resides in the mitochondrion. It participates in lipid metabolism; fatty acid biosynthesis. Functionally, carrier of the growing fatty acid chain in fatty acid biosynthesis. May be involved in the synthesis of very-long-chain fatty acids. Accessory and non-catalytic subunit of the mitochondrial membrane respiratory chain NADH dehydrogenase (Complex I), which functions in the transfer of electrons from NADH to the respiratory chain. The sequence is that of Acyl carrier protein, mitochondrial (ndufab1) from Dictyostelium discoideum (Social amoeba).